Here is a 275-residue protein sequence, read N- to C-terminus: Dermonecrotic toxin SpaSicTox-betaIIA1 (275 aa).

The active site involves H5. The Mg(2+) site is built by E25 and D27. H41 acts as the Nucleophile in catalysis. 2 cysteine pairs are disulfide-bonded: C45-C51 and C47-C190. Position 85 (D85) interacts with Mg(2+).

Belongs to the arthropod phospholipase D family. Class II subfamily. Mg(2+) serves as cofactor. Expressed by the venom gland.

The protein localises to the secreted. The enzyme catalyses an N-(acyl)-sphingosylphosphocholine = an N-(acyl)-sphingosyl-1,3-cyclic phosphate + choline. It catalyses the reaction an N-(acyl)-sphingosylphosphoethanolamine = an N-(acyl)-sphingosyl-1,3-cyclic phosphate + ethanolamine. It carries out the reaction a 1-acyl-sn-glycero-3-phosphocholine = a 1-acyl-sn-glycero-2,3-cyclic phosphate + choline. The catalysed reaction is a 1-acyl-sn-glycero-3-phosphoethanolamine = a 1-acyl-sn-glycero-2,3-cyclic phosphate + ethanolamine. In terms of biological role, dermonecrotic toxins cleave the phosphodiester linkage between the phosphate and headgroup of certain phospholipids (sphingolipid and lysolipid substrates), forming an alcohol (often choline) and a cyclic phosphate. This toxin acts on sphingomyelin (SM). It may also act on ceramide phosphoethanolamine (CPE), lysophosphatidylcholine (LPC) and lysophosphatidylethanolamine (LPE), but not on lysophosphatidylserine (LPS), and lysophosphatidylglycerol (LPG). It acts by transphosphatidylation, releasing exclusively cyclic phosphate products as second products. Induces dermonecrosis, hemolysis, increased vascular permeability, edema, inflammatory response, and platelet aggregation. In Sicarius patagonicus (Six-eyed sand spider), this protein is Dermonecrotic toxin SpaSicTox-betaIIA1.